The sequence spans 210 residues: Ribosomal RNA small subunit methyltransferase G (210 aa).

S-adenosyl-L-methionine-binding positions include Gly-77, Phe-82, 100-102, 128-129, and Arg-141; these read ERS and VE.

This sequence belongs to the methyltransferase superfamily. RNA methyltransferase RsmG family.

Its subcellular location is the cytoplasm. Specifically methylates the N7 position of a guanine in 16S rRNA. The chain is Ribosomal RNA small subunit methyltransferase G from Borrelia recurrentis (strain A1).